We begin with the raw amino-acid sequence, 37 residues long: Large ribosomal subunit protein bL36c (37 aa).

The protein belongs to the bacterial ribosomal protein bL36 family.

It is found in the plastid. The polypeptide is Large ribosomal subunit protein bL36c (Cuscuta reflexa (Southern Asian dodder)).